A 1247-amino-acid polypeptide reads, in one-letter code: E3 ubiquitin-protein ligase hecw-1 (1247 aa).

Residues 602–635 (TPPESHWKTYLDAKKRKFYVNHVTKETRWTKPDT) form the WW 1 domain. Positions 633–659 (PDTLNNNHIEPETPVHKRLSDRSASPR) are disordered. The span at 641 to 653 (IEPETPVHKRLSD) shows a compositional bias: basic and acidic residues. In terms of domain architecture, WW 2 spans 745 to 777 (QPLPSGWECITMNNRTVFLNHANKETSFYDPRI). Positions 914 to 1247 (DPFVLKKSRL…IVNGMSYSIE (334 aa)) constitute an HECT domain. Residue C1215 is the Glycyl thioester intermediate of the active site.

Expressed in the nervous system throughout the body. In the anterior ganglion, expression is limited to the two lateral outer labial neurons OLLL and OLLR.

The protein localises to the cytoplasm. The catalysed reaction is S-ubiquitinyl-[E2 ubiquitin-conjugating enzyme]-L-cysteine + [acceptor protein]-L-lysine = [E2 ubiquitin-conjugating enzyme]-L-cysteine + N(6)-ubiquitinyl-[acceptor protein]-L-lysine.. It participates in protein modification; protein ubiquitination. In terms of biological role, E3 ubiquitin-protein ligase. Functions in the OLL neurons in the anterior ganglion to inhibit avoidance to microbial pathogens such as P.aeruginosa although worms do display avoidance behavior, vacating a P.aeruginosa lawn within 24 hours. Likely to act by inhibiting the neuropeptide receptor npr-1. The protein is E3 ubiquitin-protein ligase hecw-1 of Caenorhabditis elegans.